Consider the following 1261-residue polypeptide: Structural maintenance of chromosomes protein 3 (1261 aa).

2 coiled-coil regions span residues 188 to 332 (EKIQ…HSLQ) and 406 to 450 (LIAD…YEMD). One can recognise an SMC hinge domain in the interval 534 to 645 (NGYYGTVIEL…IIVRTLDQAA (112 aa)). Coiled coils occupy residues 677–826 (KRSK…MDLM), 857–930 (NERR…DKIT), and 1023–1085 (RELE…ENRK). The short motif at 1159–1193 (LSGGQKSLVALAIIFSIQKCDPAPFYLFDEIDAAL) is the DA-box element.

It belongs to the SMC family. SMC3 subfamily. As to quaternary structure, component of the cohesin complex, composed of the smc-1 and smc-3 heterodimer attached via their SMC hinge domain, scc-1 which links them, and scc-3. Interacts with scc-1, smc-1 and tim-1.

It localises to the nucleus. The protein resides in the chromosome. Functionally, involved in chromosome cohesion during cell cycle and in DNA repair. Involved in the repair of double strand breaks during mitosis and meiosis. Required for chromosome segregation during mitosis. Central component of cohesin complex. The cohesin complex is required for the cohesion of sister chromatids after DNA replication. The cohesin complex apparently forms a large proteinaceous ring within which sister chromatids can be trapped. At anaphase, the complex is cleaved and dissociates from chromatin, allowing sister chromatids to segregate. Required for the localization of lab-1 to meiotic and mitotic chromosomes. This chain is Structural maintenance of chromosomes protein 3, found in Caenorhabditis elegans.